The following is a 152-amino-acid chain: UPF0266 membrane protein plu2700 (152 aa).

Helical transmembrane passes span 6 to 26 (IALT…EFVV), 45 to 65 (IDAL…ITVY), and 67 to 87 (SRLT…IAYI).

This sequence belongs to the UPF0266 family.

The protein localises to the cell inner membrane. The chain is UPF0266 membrane protein plu2700 from Photorhabdus laumondii subsp. laumondii (strain DSM 15139 / CIP 105565 / TT01) (Photorhabdus luminescens subsp. laumondii).